The primary structure comprises 319 residues: ATP-dependent 6-phosphofructokinase (319 aa).

Residue G11 participates in ATP binding. Residue 21 to 25 coordinates ADP; it reads RAVTR. ATP is bound by residues 72–73 and 102–105; these read RF and GDGS. D103 contacts Mg(2+). 125–127 serves as a coordination point for substrate; sequence SID. D127 (proton acceptor) is an active-site residue. R154 contributes to the ADP binding site. Substrate is bound by residues R162 and 169–171; that span reads MGR. Residues 185–187 and 213–215 contribute to the ADP site; these read GAD and KKH. Substrate-binding positions include E222, R243, and 249–252; that span reads HMQR.

The protein belongs to the phosphofructokinase type A (PFKA) family. ATP-dependent PFK group I subfamily. Prokaryotic clade 'B1' sub-subfamily. In terms of assembly, homotetramer. It depends on Mg(2+) as a cofactor.

The protein resides in the cytoplasm. The enzyme catalyses beta-D-fructose 6-phosphate + ATP = beta-D-fructose 1,6-bisphosphate + ADP + H(+). It functions in the pathway carbohydrate degradation; glycolysis; D-glyceraldehyde 3-phosphate and glycerone phosphate from D-glucose: step 3/4. Allosterically activated by ADP and other diphosphonucleosides, and allosterically inhibited by phosphoenolpyruvate. Its function is as follows. Catalyzes the phosphorylation of D-fructose 6-phosphate to fructose 1,6-bisphosphate by ATP, the first committing step of glycolysis. This Lactobacillus johnsonii (strain CNCM I-12250 / La1 / NCC 533) protein is ATP-dependent 6-phosphofructokinase.